The chain runs to 183 residues: Translation initiation factor IF-3 (183 aa).

It belongs to the IF-3 family. As to quaternary structure, monomer.

It localises to the cytoplasm. Functionally, IF-3 binds to the 30S ribosomal subunit and shifts the equilibrium between 70S ribosomes and their 50S and 30S subunits in favor of the free subunits, thus enhancing the availability of 30S subunits on which protein synthesis initiation begins. This chain is Translation initiation factor IF-3, found in Pseudomonas entomophila (strain L48).